The following is a 346-amino-acid chain: Protein phosphatase 1 regulatory subunit 7 (346 aa).

Acidic residues predominate over residues 1 to 13 (MADEEGETEVQEM). Positions 1-46 (MADEEGETEVQEMEVDRRESDESADDEAKEKPDRVDGGVKNGEVPL) are disordered. Residues 14-37 (EVDRRESDESADDEAKEKPDRVDG) are compositionally biased toward basic and acidic residues. LRR repeat units follow at residues 63 to 84 (EAED…EVLK), 85 to 106 (KVKT…EQLV), 107 to 128 (TLTE…ETLR), 129 to 150 (DLQI…ESLS), 151 to 172 (HLQR…GTLT), 173 to 194 (QLRL…DSLR), 195 to 216 (ELDS…ETLT), 217 to 238 (NLTV…QNLV), 239 to 260 (NLRE…ENNN), 261 to 282 (KLTT…KHLS), and 283 to 304 (ELQE…EELS). The region spanning 317-346 (NPLQKDAQYRRKIMLALPSVRQIDATFVRF) is the LRRCT domain.

The protein belongs to the SDS22 family.

Its subcellular location is the nucleus. Its function is as follows. Regulatory subunit of protein phosphatase 1. The polypeptide is Protein phosphatase 1 regulatory subunit 7 (ppp1r7) (Xenopus tropicalis (Western clawed frog)).